Consider the following 728-residue polypeptide: E3 ubiquitin-protein ligase LNX (728 aa).

Residues 45 to 83 form an RING-type zinc finger; the sequence is CHICLQALLDPLDTPCGHTYCTLCLTNFLVEKDFCPVDR. Residues 185–188 carry the NPXY motif motif; that stretch reads NPAY. The disordered stretch occupies residues 185-220; the sequence is NPAYVSSVEDGEPVANSSDSGRSNRTRARPFERSTM. Positions 186-244 are interaction with MAGEB18; the sequence is PAYVSSVEDGEPVANSSDSGRSNRTRARPFERSTMRSRSFKKINRALSALRRTKSGSVV. PDZ domains lie at 278 to 362 and 385 to 467; these read SIKI…VLRE and HVIL…VSRQ. Phosphoserine is present on serine 445. The disordered stretch occupies residues 481 to 500; it reads WISNGQQSPGPGERNTASKP. PDZ domains are found at residues 508-593 and 638-723; these read VVSV…ALEV and DVIL…IASW.

As to quaternary structure, interacts with CXADR. Interacts with MAGEB18 and MAGEF1. Interacts with the phosphotyrosine interaction domain of all isoforms of NUMB. IGSF5/JAM4 interacts with isoform 2 through the second PDZ domain, other isoforms may also interact with IGSF5/JAM4. In terms of tissue distribution, isoform 1 and isoform 2 are expressed in the heart. Isoform 1 is also expressed in kidney, lung and skeletal muscle while isoform 2 is also expressed in brain.

Its subcellular location is the cytoplasm. It carries out the reaction S-ubiquitinyl-[E2 ubiquitin-conjugating enzyme]-L-cysteine + [acceptor protein]-L-lysine = [E2 ubiquitin-conjugating enzyme]-L-cysteine + N(6)-ubiquitinyl-[acceptor protein]-L-lysine.. It participates in protein modification; protein ubiquitination. In terms of biological role, E3 ubiquitin-protein ligase that mediates ubiquitination and subsequent proteasomal degradation of NUMB. E3 ubiquitin ligases accept ubiquitin from an E2 ubiquitin-conjugating enzyme in the form of a thioester and then directly transfers the ubiquitin to targeted substrates. Mediates ubiquitination of isoform p66 and isoform p72 of NUMB, but not that of isoform p71 or isoform p65. Functionally, isoform 2 provides an endocytic scaffold for IGSF5/JAM4. In Mus musculus (Mouse), this protein is E3 ubiquitin-protein ligase LNX (Lnx1).